Reading from the N-terminus, the 120-residue chain is uncharacterized protein (120 aa).

A signal peptide spans 1–16 (MFKFILLCFCINFAFS).

This is an uncharacterized protein from Acheta domesticus (House cricket).